The primary structure comprises 174 residues: Co-chaperone protein HscB (174 aa).

The 73-residue stretch at Asn-2 to Leu-74 folds into the J domain.

It belongs to the HscB family. As to quaternary structure, interacts with HscA and stimulates its ATPase activity. Interacts with IscU.

In terms of biological role, co-chaperone involved in the maturation of iron-sulfur cluster-containing proteins. Seems to help targeting proteins to be folded toward HscA. The sequence is that of Co-chaperone protein HscB from Buchnera aphidicola subsp. Acyrthosiphon pisum (strain Tuc7).